Reading from the N-terminus, the 462-residue chain is Argininosuccinate lyase (462 aa).

It belongs to the lyase 1 family. Argininosuccinate lyase subfamily.

It is found in the cytoplasm. The catalysed reaction is 2-(N(omega)-L-arginino)succinate = fumarate + L-arginine. The protein operates within amino-acid biosynthesis; L-arginine biosynthesis; L-arginine from L-ornithine and carbamoyl phosphate: step 3/3. This Methylobacterium nodulans (strain LMG 21967 / CNCM I-2342 / ORS 2060) protein is Argininosuccinate lyase.